We begin with the raw amino-acid sequence, 337 residues long: Anthranilate phosphoribosyltransferase (337 aa).

Residues Gly-82, 85 to 86 (GD), Thr-90, 92 to 95 (NIST), 110 to 118 (KHGGRSVSS), and Ser-122 each bind 5-phospho-alpha-D-ribose 1-diphosphate. Residue Gly-82 participates in anthranilate binding. Residue Ser-94 coordinates Mg(2+). An anthranilate-binding site is contributed by Arg-168. The Mg(2+) site is built by Asp-226 and Glu-227.

Belongs to the anthranilate phosphoribosyltransferase family. As to quaternary structure, homodimer. The cofactor is Mg(2+).

The catalysed reaction is N-(5-phospho-beta-D-ribosyl)anthranilate + diphosphate = 5-phospho-alpha-D-ribose 1-diphosphate + anthranilate. It functions in the pathway amino-acid biosynthesis; L-tryptophan biosynthesis; L-tryptophan from chorismate: step 2/5. In terms of biological role, catalyzes the transfer of the phosphoribosyl group of 5-phosphorylribose-1-pyrophosphate (PRPP) to anthranilate to yield N-(5'-phosphoribosyl)-anthranilate (PRA). The polypeptide is Anthranilate phosphoribosyltransferase (Francisella tularensis subsp. tularensis (strain WY96-3418)).